The following is a 226-amino-acid chain: Phosphoribosylformylglycinamidine synthase subunit PurQ (226 aa).

The Glutamine amidotransferase type-1 domain maps to 3–226; that stretch reads RVAVIRFPGT…FESLVEWCRS (224 aa). Catalysis depends on cysteine 86, which acts as the Nucleophile. Active-site residues include histidine 199 and glutamate 201.

As to quaternary structure, part of the FGAM synthase complex composed of 1 PurL, 1 PurQ and 2 PurS subunits.

The protein resides in the cytoplasm. The catalysed reaction is N(2)-formyl-N(1)-(5-phospho-beta-D-ribosyl)glycinamide + L-glutamine + ATP + H2O = 2-formamido-N(1)-(5-O-phospho-beta-D-ribosyl)acetamidine + L-glutamate + ADP + phosphate + H(+). It catalyses the reaction L-glutamine + H2O = L-glutamate + NH4(+). Its pathway is purine metabolism; IMP biosynthesis via de novo pathway; 5-amino-1-(5-phospho-D-ribosyl)imidazole from N(2)-formyl-N(1)-(5-phospho-D-ribosyl)glycinamide: step 1/2. Part of the phosphoribosylformylglycinamidine synthase complex involved in the purines biosynthetic pathway. Catalyzes the ATP-dependent conversion of formylglycinamide ribonucleotide (FGAR) and glutamine to yield formylglycinamidine ribonucleotide (FGAM) and glutamate. The FGAM synthase complex is composed of three subunits. PurQ produces an ammonia molecule by converting glutamine to glutamate. PurL transfers the ammonia molecule to FGAR to form FGAM in an ATP-dependent manner. PurS interacts with PurQ and PurL and is thought to assist in the transfer of the ammonia molecule from PurQ to PurL. The chain is Phosphoribosylformylglycinamidine synthase subunit PurQ from Methanopyrus kandleri (strain AV19 / DSM 6324 / JCM 9639 / NBRC 100938).